Reading from the N-terminus, the 322-residue chain is ATP-dependent 6-phosphofructokinase 1 (322 aa).

Residue G11 participates in ATP binding. 21–25 (RAVVR) serves as a coordination point for ADP. ATP is bound by residues 72–73 (RS) and 102–105 (GDGT). Position 103 (D103) interacts with Mg(2+). A substrate-binding site is contributed by 126–128 (TID). Residue D128 is the Proton acceptor of the active site. R155 provides a ligand contact to ADP. Substrate contacts are provided by residues R163 and 170–172 (MGR). ADP-binding positions include 186–188 (GAE), R212, and 214–216 (KKS). Substrate contacts are provided by residues E223, R246, and 252–255 (HIQR).

The protein belongs to the phosphofructokinase type A (PFKA) family. ATP-dependent PFK group I subfamily. Prokaryotic clade 'B1' sub-subfamily. As to quaternary structure, homotetramer. Mg(2+) is required as a cofactor.

Its subcellular location is the cytoplasm. The enzyme catalyses beta-D-fructose 6-phosphate + ATP = beta-D-fructose 1,6-bisphosphate + ADP + H(+). It participates in carbohydrate degradation; glycolysis; D-glyceraldehyde 3-phosphate and glycerone phosphate from D-glucose: step 3/4. With respect to regulation, allosterically activated by ADP and other diphosphonucleosides. Allosterically inhibited by phosphoenolpyruvate which induces the dissociation of the active tetramer into an inactive two-subunit forms. Catalyzes the phosphorylation of D-fructose 6-phosphate to fructose 1,6-bisphosphate by ATP, the first committing step of glycolysis. This chain is ATP-dependent 6-phosphofructokinase 1, found in Thermus thermophilus (strain ATCC 27634 / DSM 579 / HB8).